Consider the following 607-residue polypeptide: Chaperone protein DnaK (607 aa).

Phosphothreonine; by autocatalysis is present on Thr174. The disordered stretch occupies residues 577–607 (GYTASGPQGGPNPGGGQSGPDGNVNTDYKVY). Gly residues predominate over residues 583–595 (PQGGPNPGGGQSG).

It belongs to the heat shock protein 70 family.

Acts as a chaperone. This chain is Chaperone protein DnaK, found in Caldicellulosiruptor bescii (strain ATCC BAA-1888 / DSM 6725 / KCTC 15123 / Z-1320) (Anaerocellum thermophilum).